The following is a 159-amino-acid chain: H/ACA ribonucleoprotein complex subunit 2-like protein (159 aa).

The disordered stretch occupies residues 1–28; the sequence is MAKTPKKDKTEEKEEHEESGGNKEDRER.

The protein belongs to the eukaryotic ribosomal protein eL8 family. Component of the small nucleolar ribonucleoprotein particle containing H/ACA-type snoRNAs (H/ACA snoRNPs). Component of the telomerase holoenzyme complex.

It localises to the nucleus. It is found in the nucleolus. Required for ribosome biogenesis. Part of a complex which catalyzes pseudouridylation of rRNA. This involves the isomerization of uridine such that the ribose is subsequently attached to C5, instead of the normal N1. Pseudouridine ('psi') residues may serve to stabilize the conformation of rRNAs. In Branchiostoma belcheri (Amphioxus), this protein is H/ACA ribonucleoprotein complex subunit 2-like protein.